A 168-amino-acid polypeptide reads, in one-letter code: Desumoylating isopeptidase 1 (168 aa).

Positions 7–149 (YPVKLYVYDL…FGQALRPFLD (143 aa)) constitute a PPPDE domain. Residue H38 is part of the active site. Positions 83 to 91 (IFLEYLSSL) match the Nuclear export signal 1 motif. Residue C108 is part of the active site. The Nuclear export signal 2 motif lies at 139 to 153 (PFGQALRPFLDSIQI).

This sequence belongs to the DeSI family. As to quaternary structure, homodimer. Interacts with UBQLN4; leading to the export of UBQLN4 from the nucleus.

The protein localises to the cytoplasm. Its subcellular location is the nucleus. The enzyme catalyses S-hexadecanoyl-L-cysteinyl-[protein] + H2O = L-cysteinyl-[protein] + hexadecanoate + H(+). Protease which deconjugates SUMO1, SUMO2 and SUMO3 from some substrate proteins. Has isopeptidase but not SUMO-processing activity. Desumoylates ZBTB46. Collaborates with UBQLN4 in the export of ubiquitinated proteins from the nucleus to the cytoplasm. Exhibits palmitoyl protein thioesterase (S-depalmitoylation) activity towards synthetic substrates 4-methylumbelliferyl-6-S-palmitoyl-beta-D-glucopyranoside and S-depalmitoylation probe 5 (DPP-5). The sequence is that of Desumoylating isopeptidase 1 (Desi1) from Rattus norvegicus (Rat).